The chain runs to 439 residues: MCCWQSRGLLVKRVLAIILGGGAGTRLYPLTKLRAKPAVPLAGKYRLIDIPVSNCINSEIVKIYVLTQFNSASLNRHISRAYNFSGFQEGFVEVLAAQQTKDNPDWFQGTADAVRQYLWLFREWDVDEYLILSGDHLYRMDYAQFVKRHRETNADITLSVVPVDDRKAPELGLMKIDAQGRITDFSEKPQGEALRAMQVDTSVLGLSAEKAKLNPYIASMGIYVFKKEVLHNLLEKYEGATDFGKEIIPDSASDHNLQAYLFDDYWEDIGTIEAFYEANLALTKQPSPDFSFYNEKAPIYTRGRYLPPTKMLNSTVTESMIGEGCMIKQCRIHHSVLGIRSRIESDCTIEDTLVMGNDFYESSSERDTLKARGEIAAGIGSGTTIRRAIIDKNARIGKNVMIVNKENVQEANREELGFYIRNGIVVVIKNVTIADGTVI.

Alpha-D-glucose 1-phosphate is bound by residues G172, 187-188 (EK), and S219.

Belongs to the bacterial/plant glucose-1-phosphate adenylyltransferase family. As to quaternary structure, homotetramer.

The enzyme catalyses alpha-D-glucose 1-phosphate + ATP + H(+) = ADP-alpha-D-glucose + diphosphate. The protein operates within glycan biosynthesis; glycogen biosynthesis. In terms of biological role, involved in the biosynthesis of ADP-glucose, a building block required for the elongation reactions to produce glycogen. Catalyzes the reaction between ATP and alpha-D-glucose 1-phosphate (G1P) to produce pyrophosphate and ADP-Glc. This chain is Glucose-1-phosphate adenylyltransferase, found in Synechocystis sp. (strain ATCC 27184 / PCC 6803 / Kazusa).